Consider the following 333-residue polypeptide: Glycerol-3-phosphate dehydrogenase [NAD(P)+] (333 aa).

NADPH is bound by residues Ser-10, Phe-11, Arg-31, and Lys-105. Sn-glycerol 3-phosphate-binding residues include Lys-105, Gly-136, and Ser-138. Ala-140 contacts NADPH. Sn-glycerol 3-phosphate is bound by residues Lys-191, Asp-244, Ser-254, Arg-255, and Asn-256. Lys-191 functions as the Proton acceptor in the catalytic mechanism. An NADPH-binding site is contributed by Arg-255. The NADPH site is built by Val-279 and Glu-281.

The protein belongs to the NAD-dependent glycerol-3-phosphate dehydrogenase family.

The protein resides in the cytoplasm. It catalyses the reaction sn-glycerol 3-phosphate + NAD(+) = dihydroxyacetone phosphate + NADH + H(+). The catalysed reaction is sn-glycerol 3-phosphate + NADP(+) = dihydroxyacetone phosphate + NADPH + H(+). The protein operates within membrane lipid metabolism; glycerophospholipid metabolism. In terms of biological role, catalyzes the reduction of the glycolytic intermediate dihydroxyacetone phosphate (DHAP) to sn-glycerol 3-phosphate (G3P), the key precursor for phospholipid synthesis. The polypeptide is Glycerol-3-phosphate dehydrogenase [NAD(P)+] (Leptospira biflexa serovar Patoc (strain Patoc 1 / Ames)).